Reading from the N-terminus, the 347-residue chain is Biotin synthase (347 aa).

Positions 40-258 constitute a Radical SAM core domain; the sequence is AQVQVSTLLS…IAVARIVMPR (219 aa). [4Fe-4S] cluster-binding residues include cysteine 55, cysteine 59, and cysteine 62. Positions 99, 130, 190, and 262 each coordinate [2Fe-2S] cluster.

It belongs to the radical SAM superfamily. Biotin synthase family. Homodimer. The cofactor is [4Fe-4S] cluster. [2Fe-2S] cluster is required as a cofactor.

The catalysed reaction is (4R,5S)-dethiobiotin + (sulfur carrier)-SH + 2 reduced [2Fe-2S]-[ferredoxin] + 2 S-adenosyl-L-methionine = (sulfur carrier)-H + biotin + 2 5'-deoxyadenosine + 2 L-methionine + 2 oxidized [2Fe-2S]-[ferredoxin]. Its pathway is cofactor biosynthesis; biotin biosynthesis; biotin from 7,8-diaminononanoate: step 2/2. Its function is as follows. Catalyzes the conversion of dethiobiotin (DTB) to biotin by the insertion of a sulfur atom into dethiobiotin via a radical-based mechanism. This chain is Biotin synthase, found in Stenotrophomonas maltophilia (strain R551-3).